Reading from the N-terminus, the 241-residue chain is Microneme antigen (241 aa).

Positions 1–34 (MRLPIRFPKYVLYGMASAVWSILFLHILVGDTMS) are cleaved as a signal peptide. Residues 35 to 103 (AADALSWSGG…ATGRGPSFVH (69 aa)) constitute a propeptide that is removed on maturation. Residues 61–83 (HEMGKELEQQHGAEEQQMQRDTK) are compositionally biased toward basic and acidic residues. The segment at 61–92 (HEMGKELEQQHGAEEQQMQRDTKPAAFSNPPH) is disordered. PAN domains follow at residues 112-181 (CFPH…PRSC) and 185-241 (CTDN…FNKS). 6 cysteine pairs are disulfide-bonded: Cys112–Cys181, Cys137–Cys159, Cys141–Cys147, Cys185–Cys189, Cys210–Cys230, and Cys214–Cys220. Ser121 is a binding site for a carbohydrate. Residues Lys162, Tyr169, and Asp174 each coordinate a carbohydrate.

It belongs to the microneme antigen family. As to quaternary structure, homodimer or heterodimer of major microneme antigen and microneme antigen. In terms of processing, contains six disulfide bonds.

Its subcellular location is the cytoplasmic vesicle. It is found in the secretory vesicle. The protein localises to the microneme. Galactose-binding lectin. Plays a role in adhesion to the host cell. Has a potential role in invasion of host cells. In Sarcocystis muris, this protein is Microneme antigen.